A 109-amino-acid polypeptide reads, in one-letter code: Tyrosine-protein phosphatase 6 (109 aa).

Positions 1–109 (YNINVIVMVC…SEDETTPLCV (109 aa)) constitute a Tyrosine-protein phosphatase domain. A substrate-binding site is contributed by Asp76.

Belongs to the protein-tyrosine phosphatase family.

The catalysed reaction is O-phospho-L-tyrosyl-[protein] + H2O = L-tyrosyl-[protein] + phosphate. This is Tyrosine-protein phosphatase 6 (STY-6) from Styela plicata (Wrinkled sea squirt).